A 273-amino-acid polypeptide reads, in one-letter code: Shikimate dehydrogenase (NADP(+)) (273 aa).

Shikimate contacts are provided by residues 14 to 16 (SKS) and Thr61. The Proton acceptor role is filled by Lys65. An NADP(+)-binding site is contributed by Asp77. Shikimate-binding residues include Asn86 and Asp102. NADP(+) contacts are provided by residues 126–130 (GAGGA), 150–155 (NRTYEK), and Met213. Tyr215 lines the shikimate pocket. An NADP(+)-binding site is contributed by Gly237.

Belongs to the shikimate dehydrogenase family. In terms of assembly, homodimer.

The catalysed reaction is shikimate + NADP(+) = 3-dehydroshikimate + NADPH + H(+). Its pathway is metabolic intermediate biosynthesis; chorismate biosynthesis; chorismate from D-erythrose 4-phosphate and phosphoenolpyruvate: step 4/7. Functionally, involved in the biosynthesis of the chorismate, which leads to the biosynthesis of aromatic amino acids. Catalyzes the reversible NADPH linked reduction of 3-dehydroshikimate (DHSA) to yield shikimate (SA). This chain is Shikimate dehydrogenase (NADP(+)), found in Aliivibrio salmonicida (strain LFI1238) (Vibrio salmonicida (strain LFI1238)).